The sequence spans 383 residues: Putative F-box protein At1g77650 (383 aa).

Positions 1-47 (MAFLSLPSDVVEEFLFKTPIESLVLCKPTCKQLYALCNDKRFIYNHL) constitute an F-box domain.

The polypeptide is Putative F-box protein At1g77650 (Arabidopsis thaliana (Mouse-ear cress)).